We begin with the raw amino-acid sequence, 57 residues long: UPF0391 membrane protein RPD_2934 (57 aa).

The next 2 helical transmembrane spans lie at 6-26 (WALI…TGVS) and 35-55 (ILFY…FTIF).

This sequence belongs to the UPF0391 family.

The protein localises to the cell membrane. This chain is UPF0391 membrane protein RPD_2934, found in Rhodopseudomonas palustris (strain BisB5).